The following is a 253-amino-acid chain: Triosephosphate isomerase (253 aa).

9–11 (NWK) contributes to the substrate binding site. Catalysis depends on His-94, which acts as the Electrophile. The active-site Proton acceptor is Glu-163. Residues Gly-169, Ser-209, and 230 to 231 (GG) each bind substrate.

The protein belongs to the triosephosphate isomerase family. As to quaternary structure, homodimer.

The protein resides in the cytoplasm. The catalysed reaction is D-glyceraldehyde 3-phosphate = dihydroxyacetone phosphate. Its pathway is carbohydrate biosynthesis; gluconeogenesis. The protein operates within carbohydrate degradation; glycolysis; D-glyceraldehyde 3-phosphate from glycerone phosphate: step 1/1. Its function is as follows. Involved in the gluconeogenesis. Catalyzes stereospecifically the conversion of dihydroxyacetone phosphate (DHAP) to D-glyceraldehyde-3-phosphate (G3P). In Dehalococcoides mccartyi (strain CBDB1), this protein is Triosephosphate isomerase.